A 139-amino-acid chain; its full sequence is Peptide methionine sulfoxide reductase MsrB (139 aa).

The region spanning 8–130 (EREWQRELSP…NSASLQLKTD (123 aa)) is the MsrB domain. The Zn(2+) site is built by cysteine 47, cysteine 50, cysteine 96, and cysteine 99. The active-site Nucleophile is the cysteine 119.

It belongs to the MsrB Met sulfoxide reductase family. Zn(2+) is required as a cofactor.

It catalyses the reaction L-methionyl-[protein] + [thioredoxin]-disulfide + H2O = L-methionyl-(R)-S-oxide-[protein] + [thioredoxin]-dithiol. The protein is Peptide methionine sulfoxide reductase MsrB of Acinetobacter baylyi (strain ATCC 33305 / BD413 / ADP1).